A 253-amino-acid polypeptide reads, in one-letter code: uncharacterized protein (253 aa).

S-adenosyl-L-methionine contacts are provided by residues Gly-45, 66-67 (DA), 94-95 (AE), and Arg-110.

This sequence belongs to the methyltransferase superfamily.

This is an uncharacterized protein from Bacillus subtilis (strain 168).